A 320-amino-acid chain; its full sequence is Malate dehydrogenase 2 (320 aa).

Residues Gly10 to Gly15 and Asp34 contribute to the NAD(+) site. Arg83 and Arg89 together coordinate substrate. NAD(+)-binding positions include Asn96 and Ile119–Asn121. Residues Asn121 and Arg152 each contribute to the substrate site. The Proton acceptor role is filled by His176.

This sequence belongs to the LDH/MDH superfamily. MDH type 3 family.

It carries out the reaction (S)-malate + NAD(+) = oxaloacetate + NADH + H(+). Functionally, catalyzes the reversible oxidation of malate to oxaloacetate. The protein is Malate dehydrogenase 2 of Rhodopseudomonas palustris (strain BisB18).